Reading from the N-terminus, the 291-residue chain is MTVDSKPQLQRLAADADVDRMCRLLEEDGAFILKGLLPFDVVESFNRELDVQMAIPPPKGERLLADKYPPHFKYVPNVATTCPTFRNTVLINPVIHAICEAYFQRTGDYWLSAAFLREIESGMPAQPFHRDDATHPLMHYQPLEAPPVSLSVIFPLTEFTEENGATEVILGSHRWTEVGTPERDQAVLATMDPGDVLIVRQRVVHAGGGNRTTAGKPRRVVLAYFNSVQLTPFETYRTMPREMVESMTVLGQRMLGWRTMKPSDPNIVGINLIDDKRLENVLQLKAADSPA.

Tyr-68 is a catalytic residue.

Belongs to the PhyH family. Homodimer. Requires Fe cation as cofactor.

It carries out the reaction fumitremorgin B + 2-oxoglutarate + AH2 + 2 O2 = verruculogen + succinate + A + CO2 + H2O. It participates in mycotoxin biosynthesis. Verruculogen synthase; part of the gene cluster that mediates the biosynthesis of fumitremorgins, indole alkaloids that carry not only intriguing chemical structures, but also interesting biological and pharmacological activities. The biosynthesis of fumitremorgin-type alkaloids begins by condensation of the two amino acids L-tryptophan and L-proline to brevianamide F, catalyzed by the non-ribosomal peptide synthetase ftmA. Brevianamide F is then prenylated by the prenyltransferase ftmPT1/ftmB in the presence of dimethylallyl diphosphate, resulting in the formation of tryprostatin B. The three cytochrome P450 monooxygenases, ftmP450-1/ftmC, ftmP450-2/ftmE and ftmP450-3/FtmG, are responsible for the conversion of tryprostatin B to 6-hydroxytryprostatin B, tryprostatin A to fumitremorgin C and fumitremorgin C to 12,13-dihydroxyfumitremorgin C, respectively. The putative methyltransferase ftmMT/ftmD is expected for the conversion of 6-hydroxytryprostatin B to tryprostatin A. FtmPT2/FtmH catalyzes the prenylation of 12,13-dihydroxyfumitre-morgin C in the presence of dimethylallyl diphosphate, resulting in the formation of fumitremorgin B. Fumitremorgin B is further converted to verruculogen by ftmOx1/ftmF via the insertion of an endoperoxide bond between the two prenyl moieties. In some fungal species, verruculogen is further converted to fumitremorgin A, but the enzymes involved in this step have not been identified yet. This chain is Verruculogen synthase, found in Aspergillus fumigatus (strain ATCC MYA-4609 / CBS 101355 / FGSC A1100 / Af293) (Neosartorya fumigata).